The sequence spans 388 residues: tRNA-specific 2-thiouridylase MnmA (388 aa).

Residues 26–33 (GLSGGVDS) and L52 contribute to the ATP site. C113 acts as the Nucleophile in catalysis. A disulfide bond links C113 and C223. Position 138 (G138) interacts with ATP. Positions 173–175 (KDQ) are interaction with tRNA. The active-site Cysteine persulfide intermediate is the C223. Residues 328–329 (RY) form an interaction with tRNA region.

Belongs to the MnmA/TRMU family.

The protein resides in the cytoplasm. The enzyme catalyses S-sulfanyl-L-cysteinyl-[protein] + uridine(34) in tRNA + AH2 + ATP = 2-thiouridine(34) in tRNA + L-cysteinyl-[protein] + A + AMP + diphosphate + H(+). In terms of biological role, catalyzes the 2-thiolation of uridine at the wobble position (U34) of tRNA, leading to the formation of s(2)U34. This Prochlorococcus marinus (strain NATL2A) protein is tRNA-specific 2-thiouridylase MnmA.